A 119-amino-acid chain; its full sequence is Beta-2-microglobulin (119 aa).

Positions 1–20 are cleaved as a signal peptide; that stretch reads MARFVVVALLVLLSLSGLEA. In terms of domain architecture, Ig-like C1-type spans 25–114; it reads PKIQVYSRHP…VTLSTPKTVK (90 aa). Cysteines 45 and 100 form a disulfide.

It belongs to the beta-2-microglobulin family. As to quaternary structure, heterodimer of an alpha chain and a beta chain. Beta-2-microglobulin is the beta-chain of major histocompatibility complex class I molecules.

It is found in the secreted. Component of the class I major histocompatibility complex (MHC). Involved in the presentation of peptide antigens to the immune system. The protein is Beta-2-microglobulin (B2M) of Aotus lemurinus (Gray-bellied night monkey).